Consider the following 763-residue polypeptide: Phosphoglycerol transferase I (763 aa).

The next 4 membrane-spanning stretches (helical) occupy residues 1 to 21, 26 to 46, 77 to 97, and 108 to 128; these read MSELLSFALFLASVLIYAWKA, WWFAATLTVLGLFVVLNITLF, ILPGIGIVLGLAAVFGALGWI, and FGYSLLALLLALGSVDASPAF.

This sequence belongs to the OpgB family.

Its subcellular location is the cell inner membrane. The enzyme catalyses a phosphatidylglycerol + a membrane-derived-oligosaccharide D-glucose = a 1,2-diacyl-sn-glycerol + a membrane-derived-oligosaccharide 6-(glycerophospho)-D-glucose.. It participates in glycan metabolism; osmoregulated periplasmic glucan (OPG) biosynthesis. Its function is as follows. Transfers a phosphoglycerol residue from phosphatidylglycerol to the membrane-bound nascent glucan backbones. This Escherichia coli O7:K1 (strain IAI39 / ExPEC) protein is Phosphoglycerol transferase I.